The primary structure comprises 238 residues: Demethylmenaquinone methyltransferase (238 aa).

S-adenosyl-L-methionine-binding positions include T65, D85, and 109–110 (DA).

The protein belongs to the class I-like SAM-binding methyltransferase superfamily. MenG/UbiE family.

It catalyses the reaction a 2-demethylmenaquinol + S-adenosyl-L-methionine = a menaquinol + S-adenosyl-L-homocysteine + H(+). The protein operates within quinol/quinone metabolism; menaquinone biosynthesis; menaquinol from 1,4-dihydroxy-2-naphthoate: step 2/2. Its function is as follows. Methyltransferase required for the conversion of demethylmenaquinol (DMKH2) to menaquinol (MKH2). This is Demethylmenaquinone methyltransferase from Roseiflexus castenholzii (strain DSM 13941 / HLO8).